Consider the following 165-residue polypeptide: Sulfopyruvate decarboxylase subunit alpha (165 aa).

This sequence belongs to the ComD family. In terms of assembly, heterododecamer composed of 6 subunits alpha and 6 subunits beta.

It carries out the reaction 3-sulfopyruvate + H(+) = sulfoacetaldehyde + CO2. Its pathway is cofactor biosynthesis; coenzyme M biosynthesis; sulfoacetaldehyde from phosphoenolpyruvate and sulfite: step 4/4. Involved in the biosynthesis of the coenzyme M (2-mercaptoethanesulfonic acid). Catalyzes the decarboxylation of sulfopyruvate to sulfoacetaldehyde. The protein is Sulfopyruvate decarboxylase subunit alpha of Methanothermobacter thermautotrophicus (strain ATCC 29096 / DSM 1053 / JCM 10044 / NBRC 100330 / Delta H) (Methanobacterium thermoautotrophicum).